The following is a 566-amino-acid chain: Serine/threonine-protein kinase haspin homolog (566 aa).

The Protein kinase domain maps to 248 to 566 (LLNTKKIGEG…HCANYLFNLN (319 aa)). Residues 254-262 (IGEGAYGEV), Lys282, 377-382 (KFAGSD), 418-423 (DLHLGN), and 456-458 (DYT) contribute to the ATP site. Residue Asp418 is the Proton acceptor of the active site.

This sequence belongs to the protein kinase superfamily. Ser/Thr protein kinase family. Haspin subfamily. Interacts with pds5 and vtd. The cofactor is Mg(2+).

The protein resides in the nucleus lamina. It localises to the chromosome. Its subcellular location is the cytoplasm. The protein localises to the cytoskeleton. It is found in the spindle. The catalysed reaction is L-seryl-[protein] + ATP = O-phospho-L-seryl-[protein] + ADP + H(+). It catalyses the reaction L-threonyl-[protein] + ATP = O-phospho-L-threonyl-[protein] + ADP + H(+). Its function is as follows. Serine/threonine-protein kinase that phosphorylates histone H3 at 'Thr-4' (H3T3ph) during mitosis and interphase. Function is essential for chromosome organization during mitosis and genome organization in interphase cells, thus playing a functional role in gene regulation. During mitosis, may act through H3T3ph to both position and modulate activation of AURKB and other components of the chromosomal passenger complex (CPC) at centromeres to ensure proper chromatid cohesion, metaphase alignment and normal progression through the cell cycle. During interphase, associates with the cohesion complex and mediates pds5 binding to chromatin to ensure correct sister chromatid cohesion, chromatin organization, and also functions with Pds5-cohesin to modify Polycomb-dependent homeotic transformations. Function during interphase is required for insulator activity, nuclear compaction, heterochromatin-induced position-effect variegation and PcG-mediated pairing-sensitive silencing. In Drosophila melanogaster (Fruit fly), this protein is Serine/threonine-protein kinase haspin homolog.